A 227-amino-acid polypeptide reads, in one-letter code: Large ribosomal subunit protein uL3 (227 aa).

Gln151 is subject to N5-methylglutamine.

The protein belongs to the universal ribosomal protein uL3 family. As to quaternary structure, part of the 50S ribosomal subunit. Forms a cluster with proteins L14 and L19. In terms of processing, methylated by PrmB.

Its function is as follows. One of the primary rRNA binding proteins, it binds directly near the 3'-end of the 23S rRNA, where it nucleates assembly of the 50S subunit. This is Large ribosomal subunit protein uL3 from Gluconobacter oxydans (strain 621H) (Gluconobacter suboxydans).